Reading from the N-terminus, the 74-residue chain is Small ribosomal subunit protein bS18 (74 aa).

Belongs to the bacterial ribosomal protein bS18 family. As to quaternary structure, part of the 30S ribosomal subunit. Forms a tight heterodimer with protein bS6.

Its function is as follows. Binds as a heterodimer with protein bS6 to the central domain of the 16S rRNA, where it helps stabilize the platform of the 30S subunit. This Zymomonas mobilis subsp. mobilis (strain ATCC 31821 / ZM4 / CP4) protein is Small ribosomal subunit protein bS18.